The primary structure comprises 459 residues: Putrescine aminotransferase (459 aa).

Pyridoxal 5'-phosphate is bound by residues 150–151 (GT) and Gln274. N6-(pyridoxal phosphate)lysine is present on Lys300. Thr332 contributes to the pyridoxal 5'-phosphate binding site.

This sequence belongs to the class-III pyridoxal-phosphate-dependent aminotransferase family. Putrescine aminotransferase subfamily. It depends on pyridoxal 5'-phosphate as a cofactor.

The enzyme catalyses an alkane-alpha,omega-diamine + 2-oxoglutarate = an omega-aminoaldehyde + L-glutamate. The catalysed reaction is putrescine + 2-oxoglutarate = 1-pyrroline + L-glutamate + H2O. It carries out the reaction cadaverine + 2-oxoglutarate = 5-aminopentanal + L-glutamate. The protein operates within amine and polyamine degradation; putrescine degradation; 4-aminobutanal from putrescine (transaminase route): step 1/1. Catalyzes the aminotransferase reaction from putrescine to 2-oxoglutarate, leading to glutamate and 4-aminobutanal, which spontaneously cyclizes to form 1-pyrroline. This is the first step in one of two pathways for putrescine degradation, where putrescine is converted into 4-aminobutanoate (gamma-aminobutyrate or GABA) via 4-aminobutanal. Also functions as a cadaverine transaminase in a a L-lysine degradation pathway to succinate that proceeds via cadaverine, glutarate and L-2-hydroxyglutarate. This Escherichia coli O7:K1 (strain IAI39 / ExPEC) protein is Putrescine aminotransferase.